Here is a 194-residue protein sequence, read N- to C-terminus: Endonuclease V (194 aa).

2 residues coordinate Mg(2+): D31 and E95.

The protein belongs to the endonuclease V family. Mg(2+) serves as cofactor.

The protein resides in the cytoplasm. The enzyme catalyses Endonucleolytic cleavage at apurinic or apyrimidinic sites to products with a 5'-phosphate.. Its function is as follows. DNA repair enzyme involved in the repair of deaminated bases. Selectively cleaves double-stranded DNA at the second phosphodiester bond 3' to a deoxyinosine leaving behind the intact lesion on the nicked DNA. The sequence is that of Endonuclease V from Pyrococcus abyssi (strain GE5 / Orsay).